The primary structure comprises 230 residues: N-(5'-phosphoribosyl)anthranilate isomerase (230 aa).

It belongs to the TrpF family.

It carries out the reaction N-(5-phospho-beta-D-ribosyl)anthranilate = 1-(2-carboxyphenylamino)-1-deoxy-D-ribulose 5-phosphate. The protein operates within amino-acid biosynthesis; L-tryptophan biosynthesis; L-tryptophan from chorismate: step 3/5. The protein is N-(5'-phosphoribosyl)anthranilate isomerase of Ralstonia nicotianae (strain ATCC BAA-1114 / GMI1000) (Ralstonia solanacearum).